Here is a 109-residue protein sequence, read N- to C-terminus: Ribulose bisphosphate carboxylase small subunit (109 aa).

It belongs to the RuBisCO small chain family. Heterohexadecamer of 8 large and 8 small subunits. Forms complexes of many stoichiometries with Raf1 and RbcL.

The protein resides in the carboxysome. Its function is as follows. RuBisCO catalyzes two reactions: the carboxylation of D-ribulose 1,5-bisphosphate, the primary event in carbon dioxide fixation, as well as the oxidative fragmentation of the pentose substrate in the photorespiration process. Both reactions occur simultaneously and in competition at the same active site. Although the small subunit is not catalytic it is essential for maximal activity. This chain is Ribulose bisphosphate carboxylase small subunit, found in Nostoc sp. (strain PCC 7120 / SAG 25.82 / UTEX 2576).